The sequence spans 90 residues: UPF0184 protein (90 aa).

A coiled-coil region spans residues 16 to 78 (DETKEEMVEL…QSLETEQNTE (63 aa)). Positions 57–90 (SQQARQELQAERQSLETEQNTEPSTKSDQEQKKQ) are disordered. Over residues 81-90 (TKSDQEQKKQ) the composition is skewed to basic and acidic residues.

Belongs to the UPF0184 (EST00098) family.

The sequence is that of UPF0184 protein from Branchiostoma floridae (Florida lancelet).